A 223-amino-acid polypeptide reads, in one-letter code: MELTLHEARVIGCLLEKEITTPEQYPLSLNSLTLACNQKTSREPVLELSETQVQIAVDSLNRKRLISEQSGFGSRVVKYKHRFCNTEFSELQLSPAALAIVCLLLLRGPQTPGELRTRSNRLHEFKDVIEVEDCIRQLMNREKPFLKQLPREAGRRESRYVELFSASSSQLETAQPESASHTVAHVAVSLDAEPLELTKRVTELEQQVAELTQKLDELIASLS.

The protein belongs to the UPF0502 family.

The protein is UPF0502 protein Sbal223_2520 of Shewanella baltica (strain OS223).